We begin with the raw amino-acid sequence, 291 residues long: Elongation factor Ts (291 aa).

The interval 79–82 is involved in Mg(2+) ion dislocation from EF-Tu; the sequence is TDFV.

Belongs to the EF-Ts family.

The protein localises to the cytoplasm. Associates with the EF-Tu.GDP complex and induces the exchange of GDP to GTP. It remains bound to the aminoacyl-tRNA.EF-Tu.GTP complex up to the GTP hydrolysis stage on the ribosome. In Anaplasma marginale (strain St. Maries), this protein is Elongation factor Ts.